A 95-amino-acid polypeptide reads, in one-letter code: Aspartyl/glutamyl-tRNA(Asn/Gln) amidotransferase subunit C (95 aa).

It belongs to the GatC family. As to quaternary structure, heterotrimer of A, B and C subunits.

The catalysed reaction is L-glutamyl-tRNA(Gln) + L-glutamine + ATP + H2O = L-glutaminyl-tRNA(Gln) + L-glutamate + ADP + phosphate + H(+). It carries out the reaction L-aspartyl-tRNA(Asn) + L-glutamine + ATP + H2O = L-asparaginyl-tRNA(Asn) + L-glutamate + ADP + phosphate + 2 H(+). Allows the formation of correctly charged Asn-tRNA(Asn) or Gln-tRNA(Gln) through the transamidation of misacylated Asp-tRNA(Asn) or Glu-tRNA(Gln) in organisms which lack either or both of asparaginyl-tRNA or glutaminyl-tRNA synthetases. The reaction takes place in the presence of glutamine and ATP through an activated phospho-Asp-tRNA(Asn) or phospho-Glu-tRNA(Gln). This Gluconobacter oxydans (strain 621H) (Gluconobacter suboxydans) protein is Aspartyl/glutamyl-tRNA(Asn/Gln) amidotransferase subunit C.